The following is a 295-amino-acid chain: Movement protein (295 aa).

Residues 256–295 (KKTNVKEESPTSDPQSGEVSSMTQSVPGAADTRIPKPRRR) are disordered. Residues 266-281 (TSDPQSGEVSSMTQSV) are compositionally biased toward polar residues.

This sequence belongs to the bromovirus movement protein family.

The protein resides in the host cell junction. It localises to the host plasmodesma. Transports viral genome to neighboring plant cells directly through plasmosdesmata, without any budding. The movement protein allows efficient cell to cell propagation, by bypassing the host cell wall barrier. Acts by forming a tubular structure at the host plasmodesmata, enlarging it enough to allow free passage of virion capsids. The polypeptide is Movement protein (Broad bean mottle virus).